The primary structure comprises 741 residues: Probable basic-leucine zipper transcription factor I (741 aa).

Residues 77-117 are a coiled coil; the sequence is QIIEQIQFLQQQQQQQHDQIQQQLHNFQQQYQQQYQQRQQQ. Composition is skewed to low complexity over residues 153-164, 172-237, 277-290, and 381-390; these read QQPPQSLQQQQQ, PQQQ…QIQK, IQQQ…IQQK, and QQQQQQQQQQ. Disordered stretches follow at residues 153–237, 277–305, and 349–390; these read QQPP…QIQK, IQQQ…SNSM, and KQKE…QQQQ. The bZIP domain maps to 429 to 492; the sequence is ESKKSIKRIN…HEGGTMAILK (64 aa). The basic motif stretch occupies residues 431 to 432; it reads KK. The tract at residues 434 to 441 is leucine-zipper; it reads IKRINQNI.

The protein belongs to the bZIP family.

It is found in the nucleus. Its function is as follows. Probable transcriptional regulator. This is Probable basic-leucine zipper transcription factor I (bzpI) from Dictyostelium discoideum (Social amoeba).